The primary structure comprises 190 residues: ATP synthase subunit delta (190 aa).

This sequence belongs to the ATPase delta chain family. As to quaternary structure, F-type ATPases have 2 components, F(1) - the catalytic core - and F(0) - the membrane proton channel. F(1) has five subunits: alpha(3), beta(3), gamma(1), delta(1), epsilon(1). F(0) has three main subunits: a(1), b(2) and c(10-14). The alpha and beta chains form an alternating ring which encloses part of the gamma chain. F(1) is attached to F(0) by a central stalk formed by the gamma and epsilon chains, while a peripheral stalk is formed by the delta and b chains.

Its subcellular location is the cell inner membrane. Its function is as follows. F(1)F(0) ATP synthase produces ATP from ADP in the presence of a proton or sodium gradient. F-type ATPases consist of two structural domains, F(1) containing the extramembraneous catalytic core and F(0) containing the membrane proton channel, linked together by a central stalk and a peripheral stalk. During catalysis, ATP synthesis in the catalytic domain of F(1) is coupled via a rotary mechanism of the central stalk subunits to proton translocation. In terms of biological role, this protein is part of the stalk that links CF(0) to CF(1). It either transmits conformational changes from CF(0) to CF(1) or is implicated in proton conduction. This is ATP synthase subunit delta from Salinibacter ruber (strain DSM 13855 / M31).